Here is a 268-residue protein sequence, read N- to C-terminus: Myeloid leukemia factor 1 (268 aa).

Residues Ser6, Ser8, and Ser32 each carry the phosphoserine modification. Positions 50 to 125 are interaction with COPS3; the sequence is RVHNRRGHND…IGDEPPKVFQ (76 aa). The disordered stretch occupies residues 208 to 268; that stretch reads PGRHNLENTR…KGSSVKSNKK (61 aa). Composition is skewed to basic and acidic residues over residues 226–237 and 244–257; these read PGSRELKRREKP and EHGR…DKLH.

This sequence belongs to the MLF family. Interacts with CENPU. Also interacts with NRBP1/MADM, YWHAZ/14-3-3-zeta and HNRPUL2/MANP. NRBP1 recruits a serine kinase which phosphorylates both itself and MLF1. Phosphorylated MLF1 then binds to YWHAZ and is retained in the cytoplasm. Retained in the nucleus by binding to HNRPUL2. Binds to COPS3/CSN3 which is required for suppression of COP1 and activation of p53. In terms of processing, phosphorylation is required for binding to YWHAZ.

The protein resides in the cytoplasm. The protein localises to the nucleus. Its subcellular location is the cell projection. It is found in the cilium. It localises to the cytoskeleton. The protein resides in the cilium basal body. Functionally, involved in lineage commitment of primary hemopoietic progenitors by restricting erythroid formation and enhancing myeloid formation. Interferes with erythropoietin-induced erythroid terminal differentiation by preventing cells from exiting the cell cycle through suppression of CDKN1B/p27Kip1 levels. Suppresses COP1 activity via CSN3 which activates p53 and induces cell cycle arrest. Binds DNA and affects the expression of a number of genes so may function as a transcription factor in the nucleus. This chain is Myeloid leukemia factor 1 (MLF1), found in Pongo abelii (Sumatran orangutan).